We begin with the raw amino-acid sequence, 47 residues long: Large ribosomal subunit protein bL34 (47 aa).

The protein belongs to the bacterial ribosomal protein bL34 family.

The sequence is that of Large ribosomal subunit protein bL34 from Mycobacterium avium (strain 104).